Reading from the N-terminus, the 369-residue chain is Type 2 DNA topoisomerase 6 subunit A (369 aa).

Residues Lys-11 to Ala-149 enclose the Topo IIA-type catalytic domain. The active-site O-(5'-phospho-DNA)-tyrosine intermediate is the Tyr-106. Positions 202 and 254 each coordinate Mg(2+).

This sequence belongs to the TOP6A family. Homodimer. Heterotetramer of two Top6A and two Top6B chains. Mg(2+) is required as a cofactor.

The catalysed reaction is ATP-dependent breakage, passage and rejoining of double-stranded DNA.. Relaxes both positive and negative superturns and exhibits a strong decatenase activity. This Methanosarcina mazei (strain ATCC BAA-159 / DSM 3647 / Goe1 / Go1 / JCM 11833 / OCM 88) (Methanosarcina frisia) protein is Type 2 DNA topoisomerase 6 subunit A.